A 532-amino-acid chain; its full sequence is Glucose-6-phosphate isomerase (532 aa).

Catalysis depends on Glu322, which acts as the Proton donor. Active-site residues include His351 and Lys457.

The protein belongs to the GPI family.

It is found in the cytoplasm. It catalyses the reaction alpha-D-glucose 6-phosphate = beta-D-fructose 6-phosphate. Its pathway is carbohydrate biosynthesis; gluconeogenesis. The protein operates within carbohydrate degradation; glycolysis; D-glyceraldehyde 3-phosphate and glycerone phosphate from D-glucose: step 2/4. Functionally, catalyzes the reversible isomerization of glucose-6-phosphate to fructose-6-phosphate. This is Glucose-6-phosphate isomerase from Synechococcus sp. (strain JA-3-3Ab) (Cyanobacteria bacterium Yellowstone A-Prime).